Here is a 344-residue protein sequence, read N- to C-terminus: tRNA N6-adenosine threonylcarbamoyltransferase (344 aa).

H119 and H123 together coordinate Fe cation. Residues 141–145 (VVSGG), D174, G187, D191, and N280 each bind substrate. D310 is a Fe cation binding site.

It belongs to the KAE1 / TsaD family. Requires Fe(2+) as cofactor.

The protein localises to the cytoplasm. It catalyses the reaction L-threonylcarbamoyladenylate + adenosine(37) in tRNA = N(6)-L-threonylcarbamoyladenosine(37) in tRNA + AMP + H(+). Required for the formation of a threonylcarbamoyl group on adenosine at position 37 (t(6)A37) in tRNAs that read codons beginning with adenine. Is involved in the transfer of the threonylcarbamoyl moiety of threonylcarbamoyl-AMP (TC-AMP) to the N6 group of A37, together with TsaE and TsaB. TsaD likely plays a direct catalytic role in this reaction. This is tRNA N6-adenosine threonylcarbamoyltransferase from Listeria welshimeri serovar 6b (strain ATCC 35897 / DSM 20650 / CCUG 15529 / CIP 8149 / NCTC 11857 / SLCC 5334 / V8).